A 182-amino-acid chain; its full sequence is Large ribosomal subunit protein uL5 (182 aa).

Belongs to the universal ribosomal protein uL5 family. Part of the 50S ribosomal subunit; part of the 5S rRNA/L5/L18/L25 subcomplex. Contacts the 5S rRNA and the P site tRNA. Forms a bridge to the 30S subunit in the 70S ribosome.

Functionally, this is one of the proteins that bind and probably mediate the attachment of the 5S RNA into the large ribosomal subunit, where it forms part of the central protuberance. In the 70S ribosome it contacts protein S13 of the 30S subunit (bridge B1b), connecting the 2 subunits; this bridge is implicated in subunit movement. Contacts the P site tRNA; the 5S rRNA and some of its associated proteins might help stabilize positioning of ribosome-bound tRNAs. In Mycoplasma mobile (strain ATCC 43663 / 163K / NCTC 11711) (Mesomycoplasma mobile), this protein is Large ribosomal subunit protein uL5.